The following is a 525-amino-acid chain: NAD(P)H-quinone oxidoreductase chain 4-1 (525 aa).

14 helical membrane passes run 4–24, 37–57, 89–109, 111–131, 134–154, 167–187, 210–230, 241–261, 273–293, 309–329, 330–350, 385–405, 416–436, and 462–482; these read FPWL…IPII, LAVG…GFDL, LIIL…PVTL, PKLF…VFAV, ILLF…ILSI, FILY…TLAF, LLLY…FPLH, TAPA…YALL, AVFA…AAFT, ISHM…GMSG, AMLQ…MVGA, LALP…GFAT, IVVV…LSML, and VFII…PKLI.

The protein belongs to the complex I subunit 4 family.

Its subcellular location is the cellular thylakoid membrane. The enzyme catalyses a plastoquinone + NADH + (n+1) H(+)(in) = a plastoquinol + NAD(+) + n H(+)(out). It carries out the reaction a plastoquinone + NADPH + (n+1) H(+)(in) = a plastoquinol + NADP(+) + n H(+)(out). Its function is as follows. NDH-1 shuttles electrons from NAD(P)H, via FMN and iron-sulfur (Fe-S) centers, to quinones in the respiratory chain. The immediate electron acceptor for the enzyme in this species is believed to be plastoquinone. Couples the redox reaction to proton translocation (for every two electrons transferred, four hydrogen ions are translocated across the cytoplasmic membrane), and thus conserves the redox energy in a proton gradient. This is NAD(P)H-quinone oxidoreductase chain 4-1 (ndhD1) from Synechocystis sp. (strain ATCC 27184 / PCC 6803 / Kazusa).